Here is a 513-residue protein sequence, read N- to C-terminus: Putative ribose/galactose/methyl galactoside import ATP-binding protein 3 (513 aa).

ABC transporter domains lie at I15–Q252 and T263–E508. Residue G47–S54 coordinates ATP.

It belongs to the ABC transporter superfamily. Carbohydrate importer 2 (CUT2) (TC 3.A.1.2) family.

The protein resides in the cell inner membrane. It carries out the reaction D-ribose(out) + ATP + H2O = D-ribose(in) + ADP + phosphate + H(+). It catalyses the reaction D-galactose(out) + ATP + H2O = D-galactose(in) + ADP + phosphate + H(+). In terms of biological role, part of an ABC transporter complex involved in carbohydrate import. Could be involved in ribose, galactose and/or methyl galactoside import. Responsible for energy coupling to the transport system. The protein is Putative ribose/galactose/methyl galactoside import ATP-binding protein 3 of Burkholderia ambifaria (strain ATCC BAA-244 / DSM 16087 / CCUG 44356 / LMG 19182 / AMMD) (Burkholderia cepacia (strain AMMD)).